We begin with the raw amino-acid sequence, 246 residues long: Probable transcriptional regulatory protein APJL_1171 (246 aa).

The protein belongs to the TACO1 family.

It localises to the cytoplasm. This chain is Probable transcriptional regulatory protein APJL_1171, found in Actinobacillus pleuropneumoniae serotype 3 (strain JL03).